Consider the following 105-residue polypeptide: Large ribosomal subunit protein uL24 (105 aa).

Belongs to the universal ribosomal protein uL24 family. Part of the 50S ribosomal subunit.

In terms of biological role, one of two assembly initiator proteins, it binds directly to the 5'-end of the 23S rRNA, where it nucleates assembly of the 50S subunit. One of the proteins that surrounds the polypeptide exit tunnel on the outside of the subunit. This is Large ribosomal subunit protein uL24 from Wolbachia pipientis wMel.